A 1133-amino-acid chain; its full sequence is SH3 and PX domain-containing protein 2A (1133 aa).

Residues 4–128 (YCVQDATVVD…RFFEARPEDV (125 aa)) form the PX domain. In terms of domain architecture, SH3 1 spans 166–225 (MILEQYVVVSNYKKQENSELSLQAGEVVDVIEKNESGWWFVSTSEEQGWVPATYLEAQNG). The residue at position 256 (threonine 256) is a Phosphothreonine. One can recognise an SH3 2 domain in the interval 266-325 (SREEKYVTVQPYTSQSKDEIGFEKGVTVEVIRKNLEGWWYIRYLGKEGWAPASYLKKAKD). A phosphoserine mark is found at serine 406 and serine 421. Disordered stretches follow at residues 415-446 (QRAQ…PPEP), 505-840 (RKKP…EWEG), 899-924 (NEQP…GKSD), and 941-964 (QSKK…SGTP). Positions 448 to 507 (SVEVEYYTIAEFQSCISDGISFRGGQKAEVIDKNSGGWWYVQIGEKEGWAPASYIDKRKK) constitute an SH3 3 domain. Basic and acidic residues predominate over residues 546–555 (DSPRKLKYEE). A phosphoserine mark is found at serine 547 and serine 567. A compositionally biased stretch (acidic residues) spans 567-576 (SEPELSEEPV). Positions 577 to 586 (EDRASGERRP) are enriched in basic and acidic residues. At serine 593 the chain carries Phosphoserine. The segment covering 608–620 (SSEDVALEEETIY) has biased composition (acidic residues). Composition is skewed to low complexity over residues 634-652 (SARG…SLSL), 658-670 (PKSG…SLLK), and 686-715 (SSAS…SKTS). Serine 644 carries the post-translational modification Phosphoserine. Residue threonine 731 is modified to Phosphothreonine. Serine 767, serine 769, and serine 819 each carry phosphoserine. A Phosphothreonine modification is found at threonine 829. Residues 840–899 (GPATSYMTCSAYQKVQDSEISFPAGVEVQVLEKQESGWWYVRFGELEGWAPSHYLVLDEN) form the SH3 4 domain. Residues 917–946 (RQNEGKSDSLEKIERRVQALNTVNQSKKAT) adopt a coiled-coil conformation. Residues serine 1002, serine 1016, serine 1017, and serine 1038 each carry the phosphoserine modification. Residues 1029 to 1059 (KGRLAERAASQGSDSPLLPAQRNSIPVSPVR) are disordered. The region spanning 1072–1133 (NLKDVYVSIA…VPSNYLEKKN (62 aa)) is the SH3 5 domain.

Belongs to the SH3PXD2 family. Interacts (via N-terminus) with CYBA. Interacts with ADAM12, ADAM15 and ADAM19. Interacts with NOXO1. Interacts (via SH3 domains) with NOXA1. Interacts with FASLG. Interacts (via PX domain) with RAB40B (GTP-bound); interaction promotes invadopodia-mediated extracellular matrix degradation. Tyrosine phosphorylated by SRC. Phosphorylation plays a regulatory role in the protein localization. The intramolecular interaction of the PX domain with the third SH3 domain maintains the protein in the cytoplasm and phosphorylation disrupts this interaction, resulting in the redistribution of the protein from cytoplasm to the perimembrane region. Phosphorylated on serine upon DNA damage, probably by ATM or ATR. In terms of tissue distribution, found in several cancer cell lines, particularly invasive breast carcinomas and melanomas.

It localises to the cytoplasm. The protein localises to the cell projection. Its subcellular location is the podosome. Functionally, adapter protein involved in invadopodia and podosome formation, extracellular matrix degradation and invasiveness of some cancer cells. Binds matrix metalloproteinases (ADAMs), NADPH oxidases (NOXs) and phosphoinositides. Acts as an organizer protein that allows NOX1- or NOX3-dependent reactive oxygen species (ROS) generation and ROS localization. In association with ADAM12, mediates the neurotoxic effect of amyloid-beta peptide. This Homo sapiens (Human) protein is SH3 and PX domain-containing protein 2A.